The following is a 220-amino-acid chain: Deoxyribose-phosphate aldolase 2 (220 aa).

Asp-89 (proton donor/acceptor) is an active-site residue. Lys-151 functions as the Schiff-base intermediate with acetaldehyde in the catalytic mechanism. Catalysis depends on Lys-180, which acts as the Proton donor/acceptor.

Belongs to the DeoC/FbaB aldolase family. DeoC type 1 subfamily.

It is found in the cytoplasm. The enzyme catalyses 2-deoxy-D-ribose 5-phosphate = D-glyceraldehyde 3-phosphate + acetaldehyde. It participates in carbohydrate degradation; 2-deoxy-D-ribose 1-phosphate degradation; D-glyceraldehyde 3-phosphate and acetaldehyde from 2-deoxy-alpha-D-ribose 1-phosphate: step 2/2. In terms of biological role, catalyzes a reversible aldol reaction between acetaldehyde and D-glyceraldehyde 3-phosphate to generate 2-deoxy-D-ribose 5-phosphate. In Staphylococcus aureus (strain MSSA476), this protein is Deoxyribose-phosphate aldolase 2.